Reading from the N-terminus, the 458-residue chain is Delta(8)-fatty-acid desaturase (458 aa).

The Cytochrome b5 heme-binding domain maps to 16–100 (KKYITSKELK…LKDYQVSDIS (85 aa)). Positions 51 and 74 each coordinate heme. A run of 2 helical transmembrane segments spans residues 122–142 (GVIY…YGVL) and 147–167 (FWIH…IAYL). The Histidine box-1 motif lies at 169–173 (HDAGH). Residues 185 to 205 (FAGIFIGNCITGISIAWWKWT) traverse the membrane as a helical segment. The short motif at 206 to 210 (HNAHH) is the Histidine box-2 element. Helical transmembrane passes span 264–284 (YYPI…LLLI), 293–313 (GLNI…VSRL), and 320–340 (VAFV…FTLN). The short motif at 383–387 (QLEHH) is the Histidine box-3 element.

The protein belongs to the fatty acid desaturase type 1 family. Requires Fe cation as cofactor.

It localises to the membrane. It carries out the reaction an N-acyl-(4R)-4-hydroxysphinganine + 2 Fe(II)-[cytochrome b5] + O2 + 2 H(+) = a (4R,8E)-4-hydroxysphingenine ceramide + 2 Fe(III)-[cytochrome b5] + 2 H2O. The catalysed reaction is an N-acyl-(4R)-4-hydroxysphinganine + 2 Fe(II)-[cytochrome b5] + O2 + 2 H(+) = a (4R,8Z)-4-hydroxysphing-8-enine ceramide + 2 Fe(III)-[cytochrome b5] + 2 H2O. In terms of biological role, plays a major role as delta(8)-fatty-acid desaturase which introduces a double bond at the 8-position in the long-chain base (LCB) of ceramides with or without a hydroxy group at the 4-position. The enzyme produces both the 8E and 8Z isomers. This structural modification contributes to the quantitative partitioning of ceramides between the two major sphingolipid classes, glucosylceramides and glycosylinositolphosphoryl ceramides. Sphingolipids are important membrane components involved in environmental stress responses, such as resistance to chilling, and act as cell signaling molecules. This is Delta(8)-fatty-acid desaturase (sld1) from Helianthus annuus (Common sunflower).